Here is a 469-residue protein sequence, read N- to C-terminus: Uronate isomerase (469 aa).

It belongs to the metallo-dependent hydrolases superfamily. Uronate isomerase family.

It catalyses the reaction D-glucuronate = D-fructuronate. It carries out the reaction aldehydo-D-galacturonate = keto-D-tagaturonate. The protein operates within carbohydrate metabolism; pentose and glucuronate interconversion. The protein is Uronate isomerase of Corynebacterium efficiens (strain DSM 44549 / YS-314 / AJ 12310 / JCM 11189 / NBRC 100395).